The sequence spans 273 residues: Large ribosomal subunit protein uL2 (273 aa).

2 disordered regions span residues 28 to 54 (KPYA…TRHI) and 221 to 273 (RGTA…RRTK). Low complexity predominate over residues 39 to 48 (KSGGRNNNGR).

The protein belongs to the universal ribosomal protein uL2 family. In terms of assembly, part of the 50S ribosomal subunit. Forms a bridge to the 30S subunit in the 70S ribosome.

Functionally, one of the primary rRNA binding proteins. Required for association of the 30S and 50S subunits to form the 70S ribosome, for tRNA binding and peptide bond formation. It has been suggested to have peptidyltransferase activity; this is somewhat controversial. Makes several contacts with the 16S rRNA in the 70S ribosome. This is Large ribosomal subunit protein uL2 from Pectobacterium carotovorum subsp. carotovorum (strain PC1).